Reading from the N-terminus, the 37-residue chain is uncharacterized protein (37 aa).

A helical membrane pass occupies residues F16–G36.

This sequence belongs to the SscA family.

The protein localises to the membrane. This is an uncharacterized protein from Bacillus subtilis (strain 168).